We begin with the raw amino-acid sequence, 293 residues long: 4-diphosphocytidyl-2-C-methyl-D-erythritol kinase (293 aa).

The active site involves lysine 10. Residue 96-106 participates in ATP binding; the sequence is PVASGIGGGSS. Aspartate 138 is a catalytic residue.

Belongs to the GHMP kinase family. IspE subfamily.

The enzyme catalyses 4-CDP-2-C-methyl-D-erythritol + ATP = 4-CDP-2-C-methyl-D-erythritol 2-phosphate + ADP + H(+). The protein operates within isoprenoid biosynthesis; isopentenyl diphosphate biosynthesis via DXP pathway; isopentenyl diphosphate from 1-deoxy-D-xylulose 5-phosphate: step 3/6. In terms of biological role, catalyzes the phosphorylation of the position 2 hydroxy group of 4-diphosphocytidyl-2C-methyl-D-erythritol. The polypeptide is 4-diphosphocytidyl-2-C-methyl-D-erythritol kinase (Chelativorans sp. (strain BNC1)).